Here is a 295-residue protein sequence, read N- to C-terminus: uncharacterized protein (295 aa).

Positions 1 to 19 are cleaved as a signal peptide; it reads MHKLLLIITVFSTFNVAQA.

This is an uncharacterized protein from Rickettsia typhi (strain ATCC VR-144 / Wilmington).